The following is a 185-amino-acid chain: Photosystem I assembly protein Ycf4 (185 aa).

Helical transmembrane passes span 24-44 and 66-86; these read YIIG…SISS and IIMG…WYLV.

It belongs to the Ycf4 family.

It is found in the cellular thylakoid membrane. Functionally, seems to be required for the assembly of the photosystem I complex. The polypeptide is Photosystem I assembly protein Ycf4 (Prochlorococcus marinus (strain AS9601)).